Here is a 229-residue protein sequence, read N- to C-terminus: Somatolactin (229 aa).

Residues 1-24 (MHLVSVIQRGVWAVLLWPNLLASS) form the signal peptide. Intrachain disulfides connect cysteine 29-cysteine 39, cysteine 87-cysteine 203, and cysteine 220-cysteine 228. Asparagine 143 and asparagine 175 each carry an N-linked (GlcNAc...) asparagine glycan.

It belongs to the somatotropin/prolactin family.

The protein localises to the secreted. The polypeptide is Somatolactin (Cyclopterus lumpus (Lumpsucker)).